The sequence spans 413 residues: Multifunctional CCA protein (413 aa).

ATP contacts are provided by G8 and R11. The CTP site is built by G8 and R11. D21 and D23 together coordinate Mg(2+). 3 residues coordinate ATP: R91, R137, and R140. CTP is bound by residues R91, R137, and R140. Positions 228-329 (TGIHTLMVLE…VKIFDKADLW (102 aa)) constitute an HD domain.

Belongs to the tRNA nucleotidyltransferase/poly(A) polymerase family. Bacterial CCA-adding enzyme type 1 subfamily. In terms of assembly, monomer. Can also form homodimers and oligomers. The cofactor is Mg(2+). Ni(2+) serves as cofactor.

It carries out the reaction a tRNA precursor + 2 CTP + ATP = a tRNA with a 3' CCA end + 3 diphosphate. The enzyme catalyses a tRNA with a 3' CCA end + 2 CTP + ATP = a tRNA with a 3' CCACCA end + 3 diphosphate. Its function is as follows. Catalyzes the addition and repair of the essential 3'-terminal CCA sequence in tRNAs without using a nucleic acid template. Adds these three nucleotides in the order of C, C, and A to the tRNA nucleotide-73, using CTP and ATP as substrates and producing inorganic pyrophosphate. tRNA 3'-terminal CCA addition is required both for tRNA processing and repair. Also involved in tRNA surveillance by mediating tandem CCA addition to generate a CCACCA at the 3' terminus of unstable tRNAs. While stable tRNAs receive only 3'-terminal CCA, unstable tRNAs are marked with CCACCA and rapidly degraded. The polypeptide is Multifunctional CCA protein (Shewanella sediminis (strain HAW-EB3)).